The primary structure comprises 880 residues: Interference hedgehog (880 aa).

Positions 1–20 (MTLLTSSLLFFSLLTSRLEA) are cleaved as a signal peptide. The Extracellular portion of the chain corresponds to 21 to 703 (IPVLEKSPAH…ETFNMSPMLT (683 aa)). 4 consecutive Ig-like C2-type domains span residues 45–142 (PGVR…IARL), 132–234 (PLVV…IQLT), 252–340 (PHLL…YIKV), and 346–432 (PQIV…LQVN). Cystine bridges form between cysteine 68–cysteine 126, cysteine 173–cysteine 220, cysteine 276–cysteine 324, and cysteine 367–cysteine 414. N-linked (GlcNAc...) asparagine glycans are attached at residues asparagine 102 and asparagine 209. Residues 426-467 (GTLLQVNPKQIQEPRESGGTHRPKPNQGSKQKQMYPPTPPNV) form a disordered region. Fibronectin type-III domains lie at 461 to 567 (PPTP…LQPG) and 575 to 670 (VPEL…TQRP). N-linked (GlcNAc...) asparagine glycosylation is present at asparagine 466. Heparin-binding residues include arginine 497, lysine 501, lysine 503, and arginine 541. Asparagine 557 is a glycosylation site (N-linked (GlcNAc...) asparagine). Residues 662 to 697 (LKQGRTQRPKTSTTEEPTLQMGDRDTTTPSHNETFN) are disordered. Composition is skewed to polar residues over residues 665–678 (GRTQRPKTSTTEEP) and 688–697 (TTPSHNETFN). Asparagine 693 carries an N-linked (GlcNAc...) asparagine glycan. A helical transmembrane segment spans residues 704–724 (GTIGGGAVLILLLISTCLCVC). Over 725–880 (RRRSSRSRGN…SSGSLNSVGV (156 aa)) the chain is Cytoplasmic. 2 disordered regions span residues 728-762 (SSRSRGNNPNKPRMAELRDDFVPLGNCSPTKQRQR) and 775-880 (QQQQ…SVGV). Low complexity-rich tracts occupy residues 823–837 (RAGGSNGSNNGNNNN) and 864–880 (SSRSENLSSGSLNSVGV).

It belongs to the immunoglobulin superfamily. IHOG family. Homodimer. Heterotetramer; 2 iHog chains bind 2 hh chains when facilitated by heparin, heparin is required to promote high-affinity interactions between hh and iHog.

It is found in the membrane. In terms of biological role, mediates response to the active Hedgehog (Hh) protein signal in embryos, functioning upstream or at the level of patched (ptc). This is Interference hedgehog from Drosophila yakuba (Fruit fly).